The following is a 433-amino-acid chain: Serine hydroxymethyltransferase (433 aa).

(6S)-5,6,7,8-tetrahydrofolate is bound by residues L127 and 131 to 133 (GHL). K236 is modified (N6-(pyridoxal phosphate)lysine).

It belongs to the SHMT family. In terms of assembly, homodimer. It depends on pyridoxal 5'-phosphate as a cofactor.

The protein localises to the cytoplasm. It carries out the reaction (6R)-5,10-methylene-5,6,7,8-tetrahydrofolate + glycine + H2O = (6S)-5,6,7,8-tetrahydrofolate + L-serine. It participates in one-carbon metabolism; tetrahydrofolate interconversion. It functions in the pathway amino-acid biosynthesis; glycine biosynthesis; glycine from L-serine: step 1/1. Catalyzes the reversible interconversion of serine and glycine with tetrahydrofolate (THF) serving as the one-carbon carrier. This reaction serves as the major source of one-carbon groups required for the biosynthesis of purines, thymidylate, methionine, and other important biomolecules. Also exhibits THF-independent aldolase activity toward beta-hydroxyamino acids, producing glycine and aldehydes, via a retro-aldol mechanism. This is Serine hydroxymethyltransferase from Corynebacterium urealyticum (strain ATCC 43042 / DSM 7109).